A 53-amino-acid polypeptide reads, in one-letter code: Conotoxin Cal6.23 (53 aa).

The signal sequence occupies residues 1–22 (MKLTAVLMVAVLVLTACQLITA). Disulfide bonds link C25–C40, C32–C47, and C39–C51.

It belongs to the conotoxin O1 superfamily. In terms of tissue distribution, expressed by the venom duct.

The protein resides in the secreted. In terms of biological role, probable neurotoxin. The chain is Conotoxin Cal6.23 from Californiconus californicus (California cone).